Here is a 185-residue protein sequence, read N- to C-terminus: Ribosome-recycling factor (185 aa).

This sequence belongs to the RRF family.

The protein localises to the cytoplasm. Its function is as follows. Responsible for the release of ribosomes from messenger RNA at the termination of protein biosynthesis. May increase the efficiency of translation by recycling ribosomes from one round of translation to another. The polypeptide is Ribosome-recycling factor (Finegoldia magna (strain ATCC 29328 / DSM 20472 / WAL 2508) (Peptostreptococcus magnus)).